A 320-amino-acid polypeptide reads, in one-letter code: uncharacterized protein (320 aa).

The tract at residues 1-40 (MDHPSTSSLPRKKVKAGVKKAGKKTGKKTTGKKKTTPSAI) is disordered. Basic residues predominate over residues 10 to 35 (PRKKVKAGVKKAGKKTGKKTTGKKKT). A helical membrane pass occupies residues 51–71 (LLVLLAVLSYLAALSLGLYIM). N-linked (GlcNAc...) asparagine glycans are attached at residues Asn-92, Asn-122, Asn-154, and Asn-167. The next 2 helical transmembrane spans lie at 186 to 206 (PLVHLLLFFVTGIMLFVAMTG) and 216 to 236 (MLVTAIALSAFSLALALVTVL). Residue Asn-247 is glycosylated (N-linked (GlcNAc...) asparagine). A helical membrane pass occupies residues 272–292 (VQGALVAIVAVFYLTMGVVFV).

Its subcellular location is the membrane. It participates in secondary metabolite biosynthesis; terpenoid biosynthesis. In terms of biological role, part of the gene cluster that mediates the biosynthesis of an ophiobolin family sesterterpenoid. This is an uncharacterized protein from Aspergillus terreus.